Here is a 225-residue protein sequence, read N- to C-terminus: Transcription factor HES-7 (225 aa).

Residues 12 to 69 (GPKMLKPLVEKRRRDRINRSLEELRLLLLERTRDQNLRNPKLEKAEILEFAVGYLRER) enclose the bHLH domain. Residues 92–122 (YLSGFRECLLRLAAFAHDASPAARAQLFSAL) form the Orange domain. The disordered stretch occupies residues 125-225 (YLRPKPPRPK…PPPAFWRPWP (101 aa)). Positions 147 to 158 (LDPAAPALGPAL) are enriched in low complexity. Residues 212–225 (APLPPPPAFWRPWP) are compositionally biased toward pro residues. The WRPW motif motif lies at 221 to 224 (WRPW).

In terms of assembly, transcription repression requires formation of a complex with a corepressor protein of the Groucho/TLE family.

It localises to the nucleus. In terms of biological role, transcriptional repressor. Represses transcription from both N box- and E box-containing promoters. May with HES1, cooperatively regulate somite formation in the presomitic mesoderm (PSM). May function as a segmentation clock, which is essential for coordinated somite segmentation. The protein is Transcription factor HES-7 (HES7) of Homo sapiens (Human).